We begin with the raw amino-acid sequence, 227 residues long: tRNA (guanine-N(7)-)-methyltransferase (227 aa).

Residues Met1–Ala21 form a disordered region. S-adenosyl-L-methionine contacts are provided by Glu54, Glu79, Asp114, and Asp136. Residue Asp136 is part of the active site. Substrate-binding positions include Lys140, Asp172, and Thr206 to Glu209.

Belongs to the class I-like SAM-binding methyltransferase superfamily. TrmB family.

The enzyme catalyses guanosine(46) in tRNA + S-adenosyl-L-methionine = N(7)-methylguanosine(46) in tRNA + S-adenosyl-L-homocysteine. Its pathway is tRNA modification; N(7)-methylguanine-tRNA biosynthesis. Functionally, catalyzes the formation of N(7)-methylguanine at position 46 (m7G46) in tRNA. In Granulibacter bethesdensis (strain ATCC BAA-1260 / CGDNIH1), this protein is tRNA (guanine-N(7)-)-methyltransferase.